The primary structure comprises 279 residues: 4-diphosphocytidyl-2-C-methyl-D-erythritol kinase (279 aa).

Lys-11 is a catalytic residue. Position 95–105 (95–105) interacts with ATP; it reads PVAAGLGGGSS. Asp-137 is an active-site residue.

Belongs to the GHMP kinase family. IspE subfamily.

It catalyses the reaction 4-CDP-2-C-methyl-D-erythritol + ATP = 4-CDP-2-C-methyl-D-erythritol 2-phosphate + ADP + H(+). It participates in isoprenoid biosynthesis; isopentenyl diphosphate biosynthesis via DXP pathway; isopentenyl diphosphate from 1-deoxy-D-xylulose 5-phosphate: step 3/6. Functionally, catalyzes the phosphorylation of the position 2 hydroxy group of 4-diphosphocytidyl-2C-methyl-D-erythritol. In Geobacter sulfurreducens (strain ATCC 51573 / DSM 12127 / PCA), this protein is 4-diphosphocytidyl-2-C-methyl-D-erythritol kinase.